The primary structure comprises 678 residues: Protein CASP (678 aa).

Residues 1 to 619 are Cytoplasmic-facing; the sequence is MAANVGSMSQ…LILSNKTART (619 aa). Coiled-coil stretches lie at residues 16-40, 67-374, 427-454, and 502-556; these read DLQQLQRELDAAATVLANRQDESEQ, LLKS…TLKS, HLTEATAKAVEQKELIARLEQDLSTIQS, and LSII…FLQS. Residue Ser586 is modified to Phosphoserine. The helical; Anchor for type IV membrane protein transmembrane segment at 620-640 threads the bilayer; the sequence is IGFFYTLFLHCLVFLVLYKLA. The Lumenal portion of the chain corresponds to 641 to 678; that stretch reads WSESVERDCAATCAKKFADHLHKFHESDNGAAAGDLWQ.

Belongs to the CASP family. Homodimer; disulfide-linked. Interacts with GOLGA5. As to expression, ubiquitously expressed.

Its subcellular location is the golgi apparatus membrane. Its function is as follows. May be involved in intra-Golgi retrograde transport. In Mus musculus (Mouse), this protein is Protein CASP (Cux1).